A 190-amino-acid chain; its full sequence is Ribosome-recycling factor (190 aa).

This sequence belongs to the RRF family.

The protein localises to the cytoplasm. Its function is as follows. Responsible for the release of ribosomes from messenger RNA at the termination of protein biosynthesis. May increase the efficiency of translation by recycling ribosomes from one round of translation to another. The chain is Ribosome-recycling factor from Fusobacterium nucleatum subsp. nucleatum (strain ATCC 25586 / DSM 15643 / BCRC 10681 / CIP 101130 / JCM 8532 / KCTC 2640 / LMG 13131 / VPI 4355).